Reading from the N-terminus, the 393-residue chain is Chalcone synthase 1 (393 aa).

The active site involves cysteine 166.

The protein belongs to the thiolase-like superfamily. Chalcone/stilbene synthases family.

The enzyme catalyses (E)-4-coumaroyl-CoA + 3 malonyl-CoA + 3 H(+) = 2',4,4',6'-tetrahydroxychalcone + 3 CO2 + 4 CoA. Its pathway is secondary metabolite biosynthesis; flavonoid biosynthesis. In terms of biological role, the primary product of this enzyme is 4,2',4',6'-tetrahydroxychalcone (also termed naringenin-chalcone or chalcone) which can under specific conditions spontaneously isomerize into naringenin. This chain is Chalcone synthase 1 (CHS1), found in Ruta graveolens (Common rue).